The sequence spans 447 residues: Asparagine--tRNA ligase (447 aa).

Belongs to the class-II aminoacyl-tRNA synthetase family. In terms of assembly, homodimer.

Its subcellular location is the cytoplasm. The enzyme catalyses tRNA(Asn) + L-asparagine + ATP = L-asparaginyl-tRNA(Asn) + AMP + diphosphate + H(+). In Streptococcus pneumoniae (strain ATCC BAA-255 / R6), this protein is Asparagine--tRNA ligase.